The following is a 308-amino-acid chain: tRNA uridine(34) hydroxylase (308 aa).

The region spanning Ala128–Ser222 is the Rhodanese domain. The active-site Cysteine persulfide intermediate is Cys182.

It belongs to the TrhO family.

It carries out the reaction uridine(34) in tRNA + AH2 + O2 = 5-hydroxyuridine(34) in tRNA + A + H2O. In terms of biological role, catalyzes oxygen-dependent 5-hydroxyuridine (ho5U) modification at position 34 in tRNAs. This is tRNA uridine(34) hydroxylase from Brucella suis biovar 1 (strain 1330).